Reading from the N-terminus, the 475-residue chain is Crocetin glucosyltransferase 3 (475 aa).

The active-site Proton acceptor is the His16. His16 contributes to the an anthocyanidin binding site. The active-site Charge relay is the Asp123. UDP-alpha-D-glucose contacts are provided by Thr144, Ala354, Gln356, His371, Trp374, Asn375, Ser376, and Glu379. Position 394 (Ala394) interacts with an anthocyanidin. The UDP-alpha-D-glucose site is built by Glu395 and Gln396.

This sequence belongs to the UDP-glycosyltransferase family. In terms of tissue distribution, mainly expressed in stamens.

The catalysed reaction is crocetin + UDP-alpha-D-glucose = beta-D-glucosyl crocetin + UDP. It carries out the reaction beta-D-glucosyl crocetin + UDP-alpha-D-glucose = bis(beta-D-glucosyl) crocetin + UDP. It catalyses the reaction beta-D-gentiobiosyl crocetin + UDP-alpha-D-glucose = beta-D-gentiobiosyl beta-D-glucosyl crocetin + UDP. Its function is as follows. Crocetin glucosyltransferase involved in the synthesis of crocin, one of the apocarotenoids responsible for the color and bitter taste of saffron. The protein is Crocetin glucosyltransferase 3 (GLT3) of Crocus sativus (Saffron).